Reading from the N-terminus, the 461-residue chain is Putative long chain fatty acid-CoA ligase VraA (461 aa).

The protein belongs to the ATP-dependent AMP-binding enzyme family.

This chain is Putative long chain fatty acid-CoA ligase VraA (vraA), found in Staphylococcus haemolyticus (strain JCSC1435).